The chain runs to 151 residues: Cytochrome c-type biogenesis protein CcmE 2 (151 aa).

Topologically, residues 1–8 are cytoplasmic; the sequence is MNPLRKKR. A helical; Signal-anchor for type II membrane protein membrane pass occupies residues 9–29; it reads LVIILAILVGVGAAVGLALSA. Residues 30 to 151 lie on the Periplasmic side of the membrane; it reads LQQNINLFYT…QSAPAPGKEG (122 aa). Heme-binding residues include His-124 and Tyr-128.

Belongs to the CcmE/CycJ family.

The protein localises to the cell inner membrane. Functionally, heme chaperone required for the biogenesis of c-type cytochromes. Transiently binds heme delivered by CcmC and transfers the heme to apo-cytochromes in a process facilitated by CcmF and CcmH. This chain is Cytochrome c-type biogenesis protein CcmE 2, found in Pseudomonas fluorescens (strain Pf0-1).